Reading from the N-terminus, the 684-residue chain is uncharacterized protein (684 aa).

Disordered regions lie at residues 267–353 (MGAR…TCTD) and 388–449 (SVAS…AERE). Residues 316–326 (GMTSAKASTSY) show a composition bias toward polar residues. Residues 438 to 449 (RPTEARRRAERE) are compositionally biased toward basic and acidic residues.

This is an uncharacterized protein from Colorado tick fever virus (strain USA/Florio N-7180) (CTFV).